The sequence spans 204 residues: Large ribosomal subunit protein eL15 (204 aa).

It belongs to the eukaryotic ribosomal protein eL15 family. Component of the large ribosomal subunit.

It is found in the cytoplasm. Its function is as follows. Component of the large ribosomal subunit. The ribosome is a large ribonucleoprotein complex responsible for the synthesis of proteins in the cell. The polypeptide is Large ribosomal subunit protein eL15 (rpl15) (Monopterus albus (Swamp eel)).